We begin with the raw amino-acid sequence, 141 residues long: Large ribosomal subunit protein uL11 (141 aa).

Belongs to the universal ribosomal protein uL11 family. As to quaternary structure, part of the ribosomal stalk of the 50S ribosomal subunit. Interacts with L10 and the large rRNA to form the base of the stalk. L10 forms an elongated spine to which L12 dimers bind in a sequential fashion forming a multimeric L10(L12)X complex. Post-translationally, one or more lysine residues are methylated.

Functionally, forms part of the ribosomal stalk which helps the ribosome interact with GTP-bound translation factors. The chain is Large ribosomal subunit protein uL11 from Phytoplasma australiense.